Reading from the N-terminus, the 280-residue chain is MSSSNFSCILSISLTFFILLLNKVNSAETTSFSITKFVPDQKNLIFQGDAKTASTGKLELSKAVKNSIGRALYSAPIHIWDSKTGSVANFQTTFTFTITAPNTYNVADGLAFFIAPIDTKPKSIHHGGYLGVFDSKTYKKSIQTVAVEIDTFYNAQWDPNPGNISSTGRHIGIDVNSIKSISTVPWSLENNKKANVAIGFNGATNVLSVDVEYPLIRHYTLSHVVPLKDVVPEWVRIGFSSSTGAEYSAHDILSWSFDSKLNLGFENNINANVSSSTQAA.

The first 26 residues, 1–26, serve as a signal peptide directing secretion; that stretch reads MSSSNFSCILSISLTFFILLLNKVNS. Glu-148 and Asp-150 together coordinate Mn(2+). Positions 150, 152, 154, and 158 each coordinate Ca(2+). Asp-158 provides a ligand contact to Mn(2+). A glycan (N-linked (GlcNAc...) asparagine) is linked at Asn-163. Position 170 (His-170) interacts with Mn(2+). A glycan (N-linked (GlcNAc...) asparagine) is linked at Asn-272.

This sequence belongs to the leguminous lectin family.

This chain is Truncated lectin 2 (LEC2), found in Medicago truncatula (Barrel medic).